A 293-amino-acid chain; its full sequence is Acetyl-coenzyme A carboxylase carboxyl transferase subunit beta (293 aa).

Positions 29–293 constitute a CoA carboxyltransferase N-terminal domain; it reads LWVKCSECSQ…GVKELAEANI (265 aa). Zn(2+)-binding residues include C33, C36, C52, and C55. The C4-type zinc-finger motif lies at 33–55; that stretch reads CSECSQVAYRKDLISNFNVCSNC.

This sequence belongs to the AccD/PCCB family. As to quaternary structure, acetyl-CoA carboxylase is a heterohexamer composed of biotin carboxyl carrier protein (AccB), biotin carboxylase (AccC) and two subunits each of ACCase subunit alpha (AccA) and ACCase subunit beta (AccD). The cofactor is Zn(2+).

The protein localises to the cytoplasm. It carries out the reaction N(6)-carboxybiotinyl-L-lysyl-[protein] + acetyl-CoA = N(6)-biotinyl-L-lysyl-[protein] + malonyl-CoA. Its pathway is lipid metabolism; malonyl-CoA biosynthesis; malonyl-CoA from acetyl-CoA: step 1/1. Its function is as follows. Component of the acetyl coenzyme A carboxylase (ACC) complex. Biotin carboxylase (BC) catalyzes the carboxylation of biotin on its carrier protein (BCCP) and then the CO(2) group is transferred by the transcarboxylase to acetyl-CoA to form malonyl-CoA. The sequence is that of Acetyl-coenzyme A carboxylase carboxyl transferase subunit beta from Prochlorococcus marinus (strain MIT 9312).